The chain runs to 312 residues: Olfactory receptor 1D5 (312 aa).

Over 1 to 25 the chain is Extracellular; sequence MDGDNQSENSQFLLLGISESPEQQR. N-linked (GlcNAc...) asparagine glycosylation is present at Asn5. The helical transmembrane segment at 26-49 threads the bilayer; that stretch reads ILFWMFLSMYLVTVLGNVLIILAI. Residues 50 to 57 lie on the Cytoplasmic side of the membrane; that stretch reads SSDSHLHT. Residues 58 to 79 form a helical membrane-spanning segment; the sequence is PMYFFLANLSFTDLFFVTNTIP. Residues 80-100 are Extracellular-facing; sequence KMLVNFQSQNKAISYAGCLTQ. Cys97 and Cys189 are disulfide-bonded. A helical transmembrane segment spans residues 101 to 120; sequence LYFLVSLVTLDNLILAVMAY. The Cytoplasmic portion of the chain corresponds to 121 to 140; sequence DRYVATCCPLHYVTAMSPGL. The chain crosses the membrane as a helical span at residues 141-158; it reads CVLLLSLCWGLSVLYGLL. Residues 159 to 196 lie on the Extracellular side of the membrane; the sequence is LTFLLTRVTFCGPREIHYLFCDMYILLWLACSNTHIIH. The helical transmembrane segment at 197–220 threads the bilayer; it reads TALIATGCFIFLTPLGFMTTSYVR. Over 221 to 237 the chain is Cytoplasmic; the sequence is IVRTILQMPSASKKYKT. Residues 238–260 form a helical membrane-spanning segment; that stretch reads FSTCASHLGVVSLFYGTLAMVYL. The Extracellular segment spans residues 261-271; it reads QPLHTYSMKDS. The helical transmembrane segment at 272–291 threads the bilayer; it reads VATVMYAVLTPMMNPFIYRL. Residues 292 to 312 lie on the Cytoplasmic side of the membrane; the sequence is RNKDMHGAPGRVLWRPFQRPK.

This sequence belongs to the G-protein coupled receptor 1 family.

It is found in the cell membrane. In terms of biological role, odorant receptor. The chain is Olfactory receptor 1D5 (OR1D5) from Homo sapiens (Human).